Reading from the N-terminus, the 865-residue chain is Chitin synthase 3 (865 aa).

Residues 1-59 (MASQYPGHQLDDIPSTNVYRPPPRHEDDEAEHALLHQNSAYQSQYDDPHSRPLTPGQES) form a disordered region. Residues 23–34 (PRHEDDEAEHAL) show a composition bias toward basic and acidic residues. A compositionally biased stretch (polar residues) spans 36 to 45 (HQNSAYQSQY). 3 N-linked (GlcNAc...) asparagine glycosylation sites follow: Asn64, Asn95, and Asn538. 3 consecutive transmembrane segments (helical) span residues 565–585 (FFLH…WFSL), 620–640 (IINT…FILA), and 650–670 (VAYI…IVLS). N-linked (GlcNAc...) asparagine glycosylation occurs at Asn682. Helical transmembrane passes span 707-727 (IVII…FLYM), 735-755 (SFAQ…IYAF), and 837-857 (LVAT…SDSL).

This sequence belongs to the chitin synthase family. Class III subfamily.

It is found in the cell membrane. It catalyses the reaction [(1-&gt;4)-N-acetyl-beta-D-glucosaminyl](n) + UDP-N-acetyl-alpha-D-glucosamine = [(1-&gt;4)-N-acetyl-beta-D-glucosaminyl](n+1) + UDP + H(+). In terms of biological role, polymerizes chitin, a structural polymer of the cell wall and septum, by transferring the sugar moiety of UDP-GlcNAc to the non-reducing end of the growing chitin polymer. Is not only stable at different pH, but is also able to tolerate a broad temperature range. With CHS2, plays an important role in virulence. In Exophiala dermatitidis (strain ATCC 34100 / CBS 525.76 / NIH/UT8656) (Black yeast), this protein is Chitin synthase 3.